The sequence spans 413 residues: Tyrosine--tRNA ligase (413 aa).

Positions 59–68 (PTAPDIHIGH) match the 'HIGH' region motif. The 'KMSKS' region motif lies at 243 to 247 (KMSKS). Residue lysine 246 participates in ATP binding. The 61-residue stretch at 351–411 (LAIGQLLKQA…GKRRFARVTL (61 aa)) folds into the S4 RNA-binding domain.

This sequence belongs to the class-I aminoacyl-tRNA synthetase family. TyrS type 2 subfamily. As to quaternary structure, homodimer.

Its subcellular location is the cytoplasm. The catalysed reaction is tRNA(Tyr) + L-tyrosine + ATP = L-tyrosyl-tRNA(Tyr) + AMP + diphosphate + H(+). In terms of biological role, catalyzes the attachment of tyrosine to tRNA(Tyr) in a two-step reaction: tyrosine is first activated by ATP to form Tyr-AMP and then transferred to the acceptor end of tRNA(Tyr). In Burkholderia lata (strain ATCC 17760 / DSM 23089 / LMG 22485 / NCIMB 9086 / R18194 / 383), this protein is Tyrosine--tRNA ligase.